A 331-amino-acid polypeptide reads, in one-letter code: Tryptophan--tRNA ligase 1 (331 aa).

ATP contacts are provided by residues 9–11 (KPT) and 17–18 (GN). The 'HIGH' region motif lies at 10–18 (PTGHLTLGN). Asp-137 lines the L-tryptophan pocket. ATP contacts are provided by residues 149–151 (GDD), Val-188, and 197–201 (KMGKS). Positions 197 to 201 (KMGKS) match the 'KMSKS' region motif.

It belongs to the class-I aminoacyl-tRNA synthetase family. In terms of assembly, homodimer.

Its subcellular location is the cytoplasm. It carries out the reaction tRNA(Trp) + L-tryptophan + ATP = L-tryptophyl-tRNA(Trp) + AMP + diphosphate + H(+). In terms of biological role, catalyzes the attachment of tryptophan to tRNA(Trp). The sequence is that of Tryptophan--tRNA ligase 1 from Streptomyces avermitilis (strain ATCC 31267 / DSM 46492 / JCM 5070 / NBRC 14893 / NCIMB 12804 / NRRL 8165 / MA-4680).